The following is a 201-amino-acid chain: Large ribosomal subunit protein uL4 (201 aa).

Residues 45–66 (AQLTRSEVSGGGKKPWRQKGTG) are disordered.

This sequence belongs to the universal ribosomal protein uL4 family. In terms of assembly, part of the 50S ribosomal subunit.

Functionally, one of the primary rRNA binding proteins, this protein initially binds near the 5'-end of the 23S rRNA. It is important during the early stages of 50S assembly. It makes multiple contacts with different domains of the 23S rRNA in the assembled 50S subunit and ribosome. Forms part of the polypeptide exit tunnel. In Aeromonas salmonicida (strain A449), this protein is Large ribosomal subunit protein uL4.